Here is a 373-residue protein sequence, read N- to C-terminus: Glutamine synthetase (373 aa).

The GS beta-grasp domain occupies 24-106 (EKVQAMYIWI…VLCEVFKYNR (83 aa)). Residues 113-373 (LRHTCRRIMD…TGDEPFEYKN (261 aa)) enclose the GS catalytic domain. Glu134 serves as a coordination point for ATP. Mn(2+) contacts are provided by Glu134, Glu136, Glu196, and Glu203. 203–208 (EFQVGP) serves as a coordination point for ATP. 246 to 247 (NW) serves as a coordination point for L-glutamate. Residue His253 participates in Mn(2+) binding. ATP-binding positions include 255-257 (NFS), Arg319, and Arg324. Position 319 (Arg319) interacts with L-glutamate. 336–338 (YFE) provides a ligand contact to ADP. Mn(2+) is bound at residue Glu338. Arg340 is an L-glutamate binding site.

It belongs to the glutamine synthetase family. As to quaternary structure, homooctamer and homotetramer. It depends on biotin as a cofactor. Mg(2+) serves as cofactor. Mn(2+) is required as a cofactor. As to expression, expressed in retina, brain and liver. Little or no detectable expression in breast muscle, pancreas and spleen.

It localises to the cytoplasm. It is found in the mitochondrion. The catalysed reaction is L-glutamate + NH4(+) + ATP = L-glutamine + ADP + phosphate + H(+). It carries out the reaction L-glutamate + H(+) = 4-aminobutanoate + CO2. Its activity is regulated as follows. Glutamate to glutamine ratio influences catalytic activity. At glutamate to glutamine ratios greater than 4, decarboxylase activity ceases. In the presence of manganese, synthetase activity is limited to concentrations between 10 mM and 20 mM, whereas decarboxylase activity is not affected. Both catalytic activities are inhibited by avidin. Functionally, glutamine synthetase that catalyzes the ATP-dependent conversion of glutamate and ammonia to glutamine. When expressed in liver, it may be involved in detoxifying intramitochondrially generated ammonia. Also acts as glutamate decarboxylase by catalyzing the production of 4-aminobutanoate (gamma-aminobutyric acid, GABA) in a pyridoxal phosphate-independent manner. In Gallus gallus (Chicken), this protein is Glutamine synthetase.